A 248-amino-acid chain; its full sequence is 3-deoxy-manno-octulosonate cytidylyltransferase (248 aa).

This sequence belongs to the KdsB family.

The protein localises to the cytoplasm. The enzyme catalyses 3-deoxy-alpha-D-manno-oct-2-ulosonate + CTP = CMP-3-deoxy-beta-D-manno-octulosonate + diphosphate. Its pathway is nucleotide-sugar biosynthesis; CMP-3-deoxy-D-manno-octulosonate biosynthesis; CMP-3-deoxy-D-manno-octulosonate from 3-deoxy-D-manno-octulosonate and CTP: step 1/1. It functions in the pathway bacterial outer membrane biogenesis; lipopolysaccharide biosynthesis. Activates KDO (a required 8-carbon sugar) for incorporation into bacterial lipopolysaccharide in Gram-negative bacteria. This chain is 3-deoxy-manno-octulosonate cytidylyltransferase, found in Klebsiella pneumoniae subsp. pneumoniae (strain ATCC 700721 / MGH 78578).